The sequence spans 366 residues: Chorismate synthase (366 aa).

Residues R48 and R54 each coordinate NADP(+). FMN contacts are provided by residues 125–127 (RSS), 238–239 (NA), G278, 293–297 (KPTSS), and R319.

It belongs to the chorismate synthase family. In terms of assembly, homotetramer. FMNH2 serves as cofactor.

The enzyme catalyses 5-O-(1-carboxyvinyl)-3-phosphoshikimate = chorismate + phosphate. The protein operates within metabolic intermediate biosynthesis; chorismate biosynthesis; chorismate from D-erythrose 4-phosphate and phosphoenolpyruvate: step 7/7. Its function is as follows. Catalyzes the anti-1,4-elimination of the C-3 phosphate and the C-6 proR hydrogen from 5-enolpyruvylshikimate-3-phosphate (EPSP) to yield chorismate, which is the branch point compound that serves as the starting substrate for the three terminal pathways of aromatic amino acid biosynthesis. This reaction introduces a second double bond into the aromatic ring system. The sequence is that of Chorismate synthase from Thiobacillus denitrificans (strain ATCC 25259 / T1).